A 322-amino-acid chain; its full sequence is Picrinine-N-methytransferase (322 aa).

Residues 103 to 112 (MLDVGCGLGG) form an SAM motif I region. The tract at residues 166-174 (GTFDLVFTI) is SAM motif II. An SAM motif III region spans residues 193–202 (VAAPGAPVVI).

The protein belongs to the class I-like SAM-binding methyltransferase superfamily. gTMT family. As to quaternary structure, homodimer. Accumulates in tissues actively synthesizing monoterpenoid indole alkaloids (MIAs) (at protein level). Mainly expressed in young leaves, but barely in roots and stems.

The protein resides in the cytoplasm. Its subcellular location is the cytosol. The catalysed reaction is picrinine + S-adenosyl-L-methionine = ervincine + S-adenosyl-L-homocysteine + H(+). Its pathway is alkaloid biosynthesis; vindoline biosynthesis. S-adenosyl-L-methionine-dependent N-methyltransferase involved in the biosynthesis of biologically active monoterpenoid indole alkaloids (MIAs) natural products including vindoline. Catalyzes the conversion of picrinine to N-methylpicrinine (ervincine). Also accepts, with low efficiency, 21-hydroxycyclolochnericine and norajmaline as substrates. This chain is Picrinine-N-methytransferase, found in Vinca minor (Common periwinkle).